We begin with the raw amino-acid sequence, 128 residues long: MLTPLQTYFPIAVALLVAVGLAAVMLALANVLGPRRPSEVKSTPFECGSLPVSPARERFSVKFYVVALLFIVFDIEAIFLYPWAVLLLPSDGYPGLGWAGYISMGIFVATLVAGLVYVWKKGVLDWAD.

Helical transmembrane passes span 9-29 (FPIA…LALA), 68-88 (LLFI…VLLL), and 96-116 (LGWA…AGLV).

This sequence belongs to the complex I subunit 3 family. As to quaternary structure, NDH-1 is composed of 14 different subunits. Subunits NuoA, H, J, K, L, M, N constitute the membrane sector of the complex.

The protein resides in the cell inner membrane. It catalyses the reaction a quinone + NADH + 5 H(+)(in) = a quinol + NAD(+) + 4 H(+)(out). Its function is as follows. NDH-1 shuttles electrons from NADH, via FMN and iron-sulfur (Fe-S) centers, to quinones in the respiratory chain. The immediate electron acceptor for the enzyme in this species is believed to be ubiquinone. Couples the redox reaction to proton translocation (for every two electrons transferred, four hydrogen ions are translocated across the cytoplasmic membrane), and thus conserves the redox energy in a proton gradient. This Anaeromyxobacter sp. (strain Fw109-5) protein is NADH-quinone oxidoreductase subunit A.